The following is a 691-amino-acid chain: Protein simr-1 (691 aa).

The region spanning Glu-139 to Ile-204 is the Tudor; degenerate domain. Disordered stretches follow at residues Thr-547–Ile-573 and Asp-588–Ser-618. 2 stretches are compositionally biased toward polar residues: residues Pro-549–Ile-573 and Asp-588–Asn-598.

The protein resides in the cytoplasm. It localises to the perinuclear region. In terms of biological role, acts downstream of piRNA production to promote mediator complex-dependent endogenous siRNA biogenesis from piRNA-target mRNAs in the RNA interference pathway in germ cells. Not required to identify target mRNA by the piRNA pathway. Plays a role in both spermatogenesis and oogenesis and in maintaining fertility over multiple generations, probably by directing mutator-dependent silencing to piRNA-targeted genes. The polypeptide is Protein simr-1 (Caenorhabditis elegans).